A 276-amino-acid polypeptide reads, in one-letter code: U6 snRNA phosphodiesterase 1 (276 aa).

The disordered stretch occupies residues 1–58 (MIVNYSSSSSEEESGSSSSPSGKRQKLDTETSEALDHGSAQRKVCKSSHLTPRLPLPE). Catalysis depends on His-131, which acts as the Proton acceptor. Residues 131-133 (HLS), Tyr-213, and 215-221 (DPSFHIS) each bind AMP. Residues Tyr-213 and 217-221 (SFHIS) contribute to the UMP site. The active-site Proton donor is the His-219.

It belongs to the 2H phosphoesterase superfamily. USB1 family.

It is found in the nucleus. It catalyses the reaction a 3'-end uridylyl-uridine-RNA = a 3'-end 2',3'-cyclophospho-uridine-RNA + uridine. The catalysed reaction is a 3'-end uridylyl-adenosine-RNA = a 3'-end 2',3'-cyclophospho-uridine-RNA + adenosine. Its function is as follows. 3'-5' RNA exonuclease that trims the 3' end of oligo(U) and oligo(A) tracts of the pre-U6 small nuclear RNA (snRNA) molecule, leading to the formation of a mature U6 snRNA 3' end-terminated with a 2',3'-cyclic phosphate. Participates in the U6 snRNA 3' end processing that prevents U6 snRNA degradation. In addition also removes uridines from the 3' end of U6atac snRNA and possibly the vault RNA VTRNA1-1. This chain is U6 snRNA phosphodiesterase 1, found in Danio rerio (Zebrafish).